We begin with the raw amino-acid sequence, 758 residues long: 5-methyltetrahydropteroyltriglutamate--homocysteine methyltransferase (758 aa).

5-methyltetrahydropteroyltri-L-glutamate is bound by residues 17-20 (RELK) and Lys-117. L-homocysteine is bound by residues 434-436 (IGS) and Glu-487. Residues 434–436 (IGS) and Glu-487 each bind L-methionine. Residues 518-519 (RC) and Trp-564 contribute to the 5-methyltetrahydropteroyltri-L-glutamate site. Residue Asp-602 coordinates L-homocysteine. L-methionine is bound at residue Asp-602. Glu-608 serves as a coordination point for 5-methyltetrahydropteroyltri-L-glutamate. Zn(2+)-binding residues include His-644, Cys-646, and Glu-668. His-697 (proton donor) is an active-site residue. A Zn(2+)-binding site is contributed by Cys-729.

Belongs to the vitamin-B12 independent methionine synthase family. Zn(2+) is required as a cofactor.

The catalysed reaction is 5-methyltetrahydropteroyltri-L-glutamate + L-homocysteine = tetrahydropteroyltri-L-glutamate + L-methionine. It functions in the pathway amino-acid biosynthesis; L-methionine biosynthesis via de novo pathway; L-methionine from L-homocysteine (MetE route): step 1/1. Functionally, catalyzes the transfer of a methyl group from 5-methyltetrahydrofolate to homocysteine resulting in methionine formation. The chain is 5-methyltetrahydropteroyltriglutamate--homocysteine methyltransferase from Yersinia pseudotuberculosis serotype I (strain IP32953).